The following is a 46-amino-acid chain: Large ribosomal subunit protein bL34c (46 aa).

Residues 1–46 are disordered; the sequence is MSKRTLEGSHRKKVRKSGFLSRSQSPTGRRILKARRKKGRKMLVKY. Residues 30–46 show a composition bias toward basic residues; it reads RILKARRKKGRKMLVKY.

This sequence belongs to the bacterial ribosomal protein bL34 family.

Its subcellular location is the plastid. It is found in the cyanelle. In Cyanophora paradoxa, this protein is Large ribosomal subunit protein bL34c (rpl34).